A 388-amino-acid polypeptide reads, in one-letter code: Venom acid phosphatase Acph-1 (388 aa).

An N-terminal signal peptide occupies residues 1-15 (MSVIAILAMVVGVQA). His26 serves as the catalytic Nucleophile. Disulfide bonds link Cys145–Cys355 and Cys330–Cys334. N-linked (GlcNAc...) asparagine glycosylation is found at Asn182 and Asn228. Glu273 serves as the catalytic Proton donor. A glycan (N-linked (GlcNAc...) asparagine) is linked at Asn366.

The protein belongs to the histidine acid phosphatase family. As to expression, expressed by the venom gland.

It is found in the secreted. The enzyme catalyses a phosphate monoester + H2O = an alcohol + phosphate. In Apis mellifera (Honeybee), this protein is Venom acid phosphatase Acph-1.